The sequence spans 119 residues: Insulin growth factor-like family member 2 (119 aa).

The first 25 residues, 1-25, serve as a signal peptide directing secretion; it reads MVPRIFAPAYVSVCLLLLCPREVIA.

This sequence belongs to the IGFL family. Detected in cerebellum, heart, placenta, spleen, stomach, testis and thymus.

Its subcellular location is the secreted. In terms of biological role, potential ligand of the IGFLR1 cell membrane receptor. This chain is Insulin growth factor-like family member 2 (IGFL2), found in Homo sapiens (Human).